The primary structure comprises 89 residues: Small ribosomal subunit protein bS20 (89 aa).

A disordered region spans residues M1–M28.

This sequence belongs to the bacterial ribosomal protein bS20 family.

Functionally, binds directly to 16S ribosomal RNA. This chain is Small ribosomal subunit protein bS20, found in Koribacter versatilis (strain Ellin345).